Reading from the N-terminus, the 79-residue chain is MSLEVFEKLEAKVQQAIDTITLLQMEIEELKEKNNSLSQEVQNAQHQREELERENNHLKEQQNGWQERLQALLGRMEEV.

Positions 3 to 79 (LEVFEKLEAK…QALLGRMEEV (77 aa)) form a coiled coil. The residue at position 8 (Lys-8) is an N6-acetyllysine. The interval 34 to 65 (NNSLSQEVQNAQHQREELERENNHLKEQQNGW) is disordered. Positions 35 to 45 (NSLSQEVQNAQ) are enriched in polar residues. Positions 46–60 (HQREELERENNHLKE) are enriched in basic and acidic residues.

The protein belongs to the ZapB family. Homodimer. The ends of the coiled-coil dimer bind to each other, forming polymers. Interacts with FtsZ.

It is found in the cytoplasm. In terms of biological role, non-essential, abundant cell division factor that is required for proper Z-ring formation. It is recruited early to the divisome by direct interaction with FtsZ, stimulating Z-ring assembly and thereby promoting cell division earlier in the cell cycle. Its recruitment to the Z-ring requires functional FtsA or ZipA. The polypeptide is Cell division protein ZapB (Shigella boydii serotype 18 (strain CDC 3083-94 / BS512)).